The chain runs to 251 residues: 5'-nucleotidase SurE (251 aa).

A divalent metal cation is bound by residues D8, D9, S39, and N91.

The protein belongs to the SurE nucleotidase family. It depends on a divalent metal cation as a cofactor.

The protein resides in the cytoplasm. It carries out the reaction a ribonucleoside 5'-phosphate + H2O = a ribonucleoside + phosphate. Its function is as follows. Nucleotidase that shows phosphatase activity on nucleoside 5'-monophosphates. The protein is 5'-nucleotidase SurE of Methylococcus capsulatus (strain ATCC 33009 / NCIMB 11132 / Bath).